Reading from the N-terminus, the 996-residue chain is Alanine--tRNA ligase, chloroplastic/mitochondrial (996 aa).

Positions 677, 681, 779, and 783 each coordinate Zn(2+).

Belongs to the class-II aminoacyl-tRNA synthetase family. As to quaternary structure, monomer. Zn(2+) is required as a cofactor.

Its subcellular location is the plastid. It is found in the chloroplast. The protein localises to the mitochondrion. It catalyses the reaction tRNA(Ala) + L-alanine + ATP = L-alanyl-tRNA(Ala) + AMP + diphosphate. Its function is as follows. Catalyzes the attachment of alanine to tRNA(Ala) in a two-step reaction: alanine is first activated by ATP to form Ala-AMP and then transferred to the acceptor end of tRNA(Ala). Also edits incorrectly charged tRNA(Ala) via its editing domain. In Oryza sativa subsp. indica (Rice), this protein is Alanine--tRNA ligase, chloroplastic/mitochondrial.